Consider the following 261-residue polypeptide: Probable septum site-determining protein MinC (261 aa).

Residues Arg-106 to Thr-145 form a disordered region. Residues Pro-118 to Pro-144 are compositionally biased toward low complexity.

This sequence belongs to the MinC family. In terms of assembly, interacts with MinD and FtsZ.

Its function is as follows. Cell division inhibitor that blocks the formation of polar Z ring septums. Rapidly oscillates between the poles of the cell to destabilize FtsZ filaments that have formed before they mature into polar Z rings. Prevents FtsZ polymerization. The chain is Probable septum site-determining protein MinC from Burkholderia orbicola (strain AU 1054).